A 373-amino-acid polypeptide reads, in one-letter code: Innexin shaking-B (373 aa).

Over 1–21 the chain is Cytoplasmic; sequence MLDIFRGLKSLVKISHVNTDS. The helical transmembrane segment at 22-42 threads the bilayer; it reads PVFRLHYSITVIILMSFSLIV. Residues 43–106 lie on the Extracellular side of the membrane; the sequence is TTRQYVGNPI…SAEATAADKK (64 aa). Residues 107 to 127 form a helical membrane-spanning segment; the sequence is IYKYYQWVCFCLFFQAILFYT. Topologically, residues 128–176 are cytoplasmic; it reads PRWLWKSWEGGKIHALMMDLDIGICSEIEKKQKKKLLLDYLWDNLRYHN. A helical membrane pass occupies residues 177-199; that stretch reads WWAYRYYVCEFLSLCNVIGQMFL. The Extracellular portion of the chain corresponds to 200–268; it reads MNRFFDGEFM…ILPLNVVNEK (69 aa). A helical transmembrane segment spans residues 269–289; the sequence is IYIFLWFWFIILTILTTLTIF. The Cytoplasmic portion of the chain corresponds to 290–373; sequence YRIIIIFSPR…PGMKGEIQDA (84 aa).

It belongs to the pannexin family. In terms of assembly, monomer.

It is found in the cell membrane. The protein localises to the cell junction. It localises to the gap junction. Its function is as follows. Structural component of the gap junctions at electrical synapses in distal and mid-depth levels in the lamina. The chain is Innexin shaking-B from Anopheles gambiae (African malaria mosquito).